The chain runs to 432 residues: E3 ubiquitin-protein ligase ATL42 (432 aa).

Positions 1 to 18 are cleaved as a signal peptide; that stretch reads MYQIFFFFLPLLHSYASA. Residues 37 to 57 form a helical membrane-spanning segment; that stretch reads LAVVTGVLAIMFALTFVLLVY. The RING-type; atypical zinc-finger motif lies at 123–165; sequence CSVCLSKFESVEILRLLPKCRHAFHIGCIDQWLEQHATCPLCR.

Belongs to the RING-type zinc finger family. ATL subfamily.

It localises to the membrane. The catalysed reaction is S-ubiquitinyl-[E2 ubiquitin-conjugating enzyme]-L-cysteine + [acceptor protein]-L-lysine = [E2 ubiquitin-conjugating enzyme]-L-cysteine + N(6)-ubiquitinyl-[acceptor protein]-L-lysine.. Its pathway is protein modification; protein ubiquitination. E3 ubiquitin-protein ligase able to catalyze polyubiquitination with ubiquitin-conjugating enzyme E2 UBC8 in vitro. In Arabidopsis thaliana (Mouse-ear cress), this protein is E3 ubiquitin-protein ligase ATL42 (ATL42).